The following is a 267-amino-acid chain: Regulatory protein VirG (267 aa).

The 115-residue stretch at His-29 to Leu-143 folds into the Response regulatory domain. Residue Asp-78 is modified to 4-aspartylphosphate. The segment at residues Arg-155–Ala-255 is a DNA-binding region (ompR/PhoB-type).

In terms of processing, phosphorylated by wide host range (WHR) VirA protein.

Its subcellular location is the cytoplasm. Functionally, virG is required for the positive regulation of at least two vir loci encoded by the Ti plasmid of A.tumefaciens. The sequence is that of Regulatory protein VirG (virG) from Rhizobium radiobacter (Agrobacterium tumefaciens).